A 406-amino-acid polypeptide reads, in one-letter code: Pyruvate dehydrogenase E1 component subunit beta-3, chloroplastic (406 aa).

The N-terminal 70 residues, 1–70 (MSAILQGAGA…PLIPNAVTTK (70 aa)), are a transit peptide targeting the chloroplast. Glutamate 142 is a thiamine diphosphate binding site. K(+)-binding residues include valine 195, alanine 243, isoleucine 244, and asparagine 248.

As to quaternary structure, tetramer of 2 alpha and 2 beta subunits. The cofactor is thiamine diphosphate.

The protein localises to the plastid. Its subcellular location is the chloroplast. It catalyses the reaction N(6)-[(R)-lipoyl]-L-lysyl-[protein] + pyruvate + H(+) = N(6)-[(R)-S(8)-acetyldihydrolipoyl]-L-lysyl-[protein] + CO2. Functionally, the pyruvate dehydrogenase complex catalyzes the overall conversion of pyruvate to acetyl-CoA and CO(2). It contains multiple copies of three enzymatic components: pyruvate dehydrogenase (E1), dihydrolipoamide acetyltransferase (E2) and lipoamide dehydrogenase (E3). The sequence is that of Pyruvate dehydrogenase E1 component subunit beta-3, chloroplastic (E1-BETA-2) from Arabidopsis thaliana (Mouse-ear cress).